Here is a 657-residue protein sequence, read N- to C-terminus: Zinc transporter ZIP4 (657 aa).

An N-terminal signal peptide occupies residues 1 to 22 (MMLPKSLTQGLLLAMLVGTAAM). Residues 23-335 (VQPYHLLSLL…QDQLSQAERY (313 aa)) lie on the Extracellular side of the membrane. N-linked (GlcNAc...) asparagine glycosylation is found at Asn193, Asn220, and Asn268. The helical transmembrane segment at 336–356 (LYGSLATLLICLCAVFGLLLL) threads the bilayer. Over 357–374 (TCAKCSTATHYIMQTFLS) the chain is Cytoplasmic. Residues 375-395 (LAVGALTGDALLHLIPKVLGL) form a helical membrane-spanning segment. At 396-417 (HTHSGEVHSHEEESIGGQSTWR) the chain is on the extracellular side. Residues 418-438 (LLAVLGGFYIFFLFESFFNLL) form a helical membrane-spanning segment. Over 439–508 (LPRDQDHEKD…LRAELRMLPY (70 aa)) the chain is Cytoplasmic. Positions 462–464 (LQL) match the Essential for SLC39A4 endocytosis motif. The tract at residues 467 to 491 (SNLRQSKQPHESSRSDLVTEETPEL) is disordered. Residues 509-528 (LITLGDAVHNFADGLAVGAA) form a helical membrane-spanning segment. 3 residues coordinate Zn(2+): His517, Asn518, and Asp521. The Extracellular portion of the chain corresponds to 529-536 (FSSTWKTG). A helical transmembrane segment spans residues 537–563 (LATSLAVFCHELPHELGDFAALLHAGL). Zn(2+) contacts are provided by His546, Glu547, and His550. The Cytoplasmic segment spans residues 564 to 568 (TVKRA). A helical transmembrane segment spans residues 569–589 (LLLNLASALTAFAGLYVALAV). Over 590-597 (GVGEEGET) the chain is Extracellular. A helical transmembrane segment spans residues 598–618 (WILAVATGLFLYVALCDMLPA). The Cytoplasmic segment spans residues 619-627 (MMNVRDQRP). A helical membrane pass occupies residues 628–648 (WLLFLLHNVGLLGGWTILLLL). Residues 649 to 657 (SLYEDSITF) lie on the Extracellular side of the membrane.

This sequence belongs to the ZIP transporter (TC 2.A.5) family. Homodimer; homodimerization is mediated by the transmembrane domain. Post-translationally, the extracellular N-terminal ectodomain is cleaved when cells are Zn(2+) deficient, N-terminally cleaved SLC39A4 is internalized at a faster rate. In terms of processing, under excess Zn(2+) conditions, SLC39A4 on the cell surface is rapidly endocytosed, ubiquitinated and degraded. Glycosylated. In terms of tissue distribution, expressed in duodenum, jejunum, and ileum.

It is found in the cell membrane. The protein localises to the recycling endosome membrane. The protein resides in the apical cell membrane. It carries out the reaction Zn(2+)(in) = Zn(2+)(out). Selective transporter that mediates the uptake of Zn(2+). Plays an essential role for dietary zinc uptake from small intestine. The Zn(2+) uniporter activity is regulated by zinc availability. Also exhibits polyspecific binding and transport of Cu(2+), Cd(2+) and possibly Ni(2+) but at higher concentrations. This Rattus norvegicus (Rat) protein is Zinc transporter ZIP4 (Slc39a4).